Here is a 294-residue protein sequence, read N- to C-terminus: Lipoyl synthase (294 aa).

[4Fe-4S] cluster-binding residues include Cys35, Cys40, Cys46, Cys61, Cys65, Cys68, and Ser273. Positions 47–262 constitute a Radical SAM core domain; the sequence is FRQRQATFLI…REQALSMGFE (216 aa).

It belongs to the radical SAM superfamily. Lipoyl synthase family. [4Fe-4S] cluster is required as a cofactor.

It localises to the cytoplasm. It carries out the reaction [[Fe-S] cluster scaffold protein carrying a second [4Fe-4S](2+) cluster] + N(6)-octanoyl-L-lysyl-[protein] + 2 oxidized [2Fe-2S]-[ferredoxin] + 2 S-adenosyl-L-methionine + 4 H(+) = [[Fe-S] cluster scaffold protein] + N(6)-[(R)-dihydrolipoyl]-L-lysyl-[protein] + 4 Fe(3+) + 2 hydrogen sulfide + 2 5'-deoxyadenosine + 2 L-methionine + 2 reduced [2Fe-2S]-[ferredoxin]. It functions in the pathway protein modification; protein lipoylation via endogenous pathway; protein N(6)-(lipoyl)lysine from octanoyl-[acyl-carrier-protein]: step 2/2. Catalyzes the radical-mediated insertion of two sulfur atoms into the C-6 and C-8 positions of the octanoyl moiety bound to the lipoyl domains of lipoate-dependent enzymes, thereby converting the octanoylated domains into lipoylated derivatives. The polypeptide is Lipoyl synthase (Geotalea daltonii (strain DSM 22248 / JCM 15807 / FRC-32) (Geobacter daltonii)).